The primary structure comprises 556 residues: Arginine--tRNA ligase (556 aa).

Residues 132–142 (ANPTGDLHLGH) carry the 'HIGH' region motif.

This sequence belongs to the class-I aminoacyl-tRNA synthetase family. As to quaternary structure, monomer.

It is found in the cytoplasm. The enzyme catalyses tRNA(Arg) + L-arginine + ATP = L-arginyl-tRNA(Arg) + AMP + diphosphate. The polypeptide is Arginine--tRNA ligase (argS) (Bacillus subtilis (strain 168)).